Reading from the N-terminus, the 79-residue chain is Acyl carrier protein (79 aa).

Positions 1-77 (MNNVEKKIKK…KSIDYINNKN (77 aa)) constitute a Carrier domain. The residue at position 37 (Ser37) is an O-(pantetheine 4'-phosphoryl)serine.

This sequence belongs to the acyl carrier protein (ACP) family. In terms of processing, 4'-phosphopantetheine is transferred from CoA to a specific serine of apo-ACP by AcpS. This modification is essential for activity because fatty acids are bound in thioester linkage to the sulfhydryl of the prosthetic group.

The protein localises to the cytoplasm. The protein operates within lipid metabolism; fatty acid biosynthesis. Carrier of the growing fatty acid chain in fatty acid biosynthesis. This is Acyl carrier protein from Buchnera aphidicola subsp. Schizaphis graminum (strain Sg).